We begin with the raw amino-acid sequence, 297 residues long: MVHQVLYRALVSTKWLAESIRSGSLGPGLRVLDASWYSPGTRQARKEYQERHVPGASFFDIEECRDTTSPYEMMLPSEAHFADYVGSLGISNDTHVVVYDGDNLGSFYAPRVWWMFRVFGHRTVSVLNGGFRNWLKEGHPVTSEPSRPEPAVFKATLDRSLLKTYEQVLENLQSKRFQLVDSRAQGRYLGTEPEPDIVGLDSGHIRGSANMPFMNFLTEDGFEKSPEELRAIFQDKKVDLSQPLIATCRKGVTACHIALAAYLCGKPDVAVYDGSWSEWFHQAPPETRVSQGKSGKA.

K14 is subject to N6-acetyllysine; alternate. Residue K14 is modified to N6-succinyllysine; alternate. The Rhodanese 1 domain occupies 25 to 143 (LGPGLRVLDA…WLKEGHPVTS (119 aa)). A glycan (O-linked (GlcNAc) serine) is linked at S35. A Phosphoserine modification is found at S38. At K136 the chain carries N6-acetyllysine; alternate. Position 136 is an N6-succinyllysine; alternate (K136). The interval 144–159 (EPSRPEPAVFKATLDR) is hinge. K163 is subject to N6-acetyllysine. The Rhodanese 2 domain maps to 173–288 (QSKRFQLVDS…WFHQAPPETR (116 aa)). K175 is subject to N6-acetyllysine; alternate. K175 bears the N6-succinyllysine; alternate mark. R187 contributes to the substrate binding site. At K224 the chain carries N6-acetyllysine; alternate. The residue at position 224 (K224) is an N6-succinyllysine; alternate. Residue K236 is modified to N6-acetyllysine. The residue at position 237 (K237) is an N6-acetyllysine; alternate. K237 is subject to N6-succinyllysine; alternate. C248 acts as the Cysteine persulfide intermediate in catalysis. K250 provides a ligand contact to substrate.

In terms of assembly, monomer.

The protein localises to the mitochondrion matrix. It catalyses the reaction thiosulfate + hydrogen cyanide = thiocyanate + sulfite + 2 H(+). In terms of biological role, together with MRPL18, acts as a mitochondrial import factor for the cytosolic 5S rRNA. Only the nascent unfolded cytoplasmic form is able to bind to the 5S rRNA. Formation of iron-sulfur complexes and cyanide detoxification. Binds molecular oxygen and sulfur. The sequence is that of Thiosulfate sulfurtransferase (TST) from Cricetulus griseus (Chinese hamster).